We begin with the raw amino-acid sequence, 512 residues long: Respiratory nitrate reductase 1 beta chain (512 aa).

4Fe-4S ferredoxin-type domains lie at 7 to 35 (VGMV…SREG), 175 to 206 (TFMM…KREE), and 208 to 237 (GIVL…FNWK). The [4Fe-4S] cluster site is built by Cys-16, Cys-19, Cys-22, Cys-26, Cys-184, Cys-187, and Cys-192. [3Fe-4S] cluster contacts are provided by Cys-196, Cys-217, and Cys-223. 5 residues coordinate [4Fe-4S] cluster: Cys-227, Cys-244, Cys-247, Cys-259, and Cys-263.

In terms of assembly, dimer of heterotrimers each composed of an alpha, a beta and a gamma chain. Alpha and beta are catalytic chains; gamma chains are involved in binding the enzyme complex to the cytoplasmic membrane. Requires [4Fe-4S] cluster as cofactor. The cofactor is [3Fe-4S] cluster.

It is found in the cell membrane. The enzyme catalyses nitrate + a quinol = a quinone + nitrite + H2O. In terms of biological role, the nitrate reductase enzyme complex allows E.coli to use nitrate as an electron acceptor during anaerobic growth. The beta chain is an electron transfer unit containing four cysteine clusters involved in the formation of iron-sulfur centers. Electrons are transferred from the gamma chain to the molybdenum cofactor of the alpha subunit. This Escherichia coli (strain K12) protein is Respiratory nitrate reductase 1 beta chain (narH).